Here is a 106-residue protein sequence, read N- to C-terminus: Ribosomal protein eL42-like (106 aa).

Residues 26–53 (YKKGKDSLYAQGRRRYDRKQSGYGGQTK) form a disordered region. Lys-53 carries the post-translational modification N6-methyllysine.

It belongs to the eukaryotic ribosomal protein eL42 family. Ubiquitously expressed.

Its subcellular location is the cytoplasm. The chain is Ribosomal protein eL42-like (RPL36AL) from Homo sapiens (Human).